A 273-amino-acid chain; its full sequence is MNNRVHQGHLARKRFGQNFLNDQFVIDSIVSAINPQKGQAMVEIGPGLAALTEPVGERLDQLTVIELDRDLAARLQTHPFLGPKLTIYQQDAMTFNFGELAEKMGQPLRVFGNLPYNISTPLMFHLFSYTDAIADMHFMLQKEVVNRLVAGPNSKAYGRLSVMAQYYCNVIPVLEVPPSAFTPPPKVDSAVVRLVPHATMPHPVKDVRVLSRITTEAFNQRRKTIRNSLGNLFSAEVLTGMGIDPAMRAENISVAQYCQMANYLAENAPLQES.

Residues Asn18, Leu20, Gly45, Glu66, Asp91, and Asn113 each coordinate S-adenosyl-L-methionine.

Belongs to the class I-like SAM-binding methyltransferase superfamily. rRNA adenine N(6)-methyltransferase family. RsmA subfamily.

It is found in the cytoplasm. The enzyme catalyses adenosine(1518)/adenosine(1519) in 16S rRNA + 4 S-adenosyl-L-methionine = N(6)-dimethyladenosine(1518)/N(6)-dimethyladenosine(1519) in 16S rRNA + 4 S-adenosyl-L-homocysteine + 4 H(+). In terms of biological role, specifically dimethylates two adjacent adenosines (A1518 and A1519) in the loop of a conserved hairpin near the 3'-end of 16S rRNA in the 30S particle. May play a critical role in biogenesis of 30S subunits. This chain is Ribosomal RNA small subunit methyltransferase A, found in Escherichia coli (strain 55989 / EAEC).